A 760-amino-acid polypeptide reads, in one-letter code: Acetyl-CoA decarbonylase/synthase complex subunit alpha 1 (760 aa).

6 residues coordinate [4Fe-4S] cluster: Cys-56, Cys-59, Cys-60, Cys-62, Cys-67, and Cys-77. Residue His-100 participates in CO binding. His-231, Cys-259, and Cys-298 together coordinate [Ni-4Fe-4S] cluster. 2 consecutive 4Fe-4S ferredoxin-type domains span residues 381 to 410 (KKLQ…VEAM) and 418 to 450 (FEGL…MIED). Residues Cys-390, Cys-393, Cys-396, Cys-400, Cys-428, Cys-431, Cys-434, and Cys-438 each coordinate [4Fe-4S] cluster. Positions 496, 525, and 560 each coordinate [Ni-4Fe-4S] cluster.

Belongs to the Ni-containing carbon monoxide dehydrogenase family. As to quaternary structure, heterotetramer of two alpha and two epsilon subunits. The ACDS complex is made up of alpha, epsilon, beta, gamma and delta subunits with a probable stoichiometry of (alpha(2)epsilon(2))(4)-beta(8)-(gamma(1)delta(1))(8). Requires [4Fe-4S] cluster as cofactor. It depends on [Ni-4Fe-4S] cluster as a cofactor.

The enzyme catalyses CO + 2 oxidized [2Fe-2S]-[ferredoxin] + H2O = 2 reduced [2Fe-2S]-[ferredoxin] + CO2 + 2 H(+). Functionally, part of the ACDS complex that catalyzes the reversible cleavage of acetyl-CoA, allowing autotrophic growth from CO(2). The alpha-epsilon subcomponent functions as a carbon monoxide dehydrogenase. This chain is Acetyl-CoA decarbonylase/synthase complex subunit alpha 1, found in Methanopyrus kandleri (strain AV19 / DSM 6324 / JCM 9639 / NBRC 100938).